Here is a 153-residue protein sequence, read N- to C-terminus: Large ribosomal subunit protein uL15 (153 aa).

The segment at 1 to 48 (MRLNELSPAPGSKKDRKRVGRGDAGRGNYSGRGMKGQKARSGGATRPG) is disordered.

The protein belongs to the universal ribosomal protein uL15 family. In terms of assembly, part of the 50S ribosomal subunit.

Binds to the 23S rRNA. The polypeptide is Large ribosomal subunit protein uL15 (Dehalococcoides mccartyi (strain ATCC BAA-2266 / KCTC 15142 / 195) (Dehalococcoides ethenogenes (strain 195))).